Reading from the N-terminus, the 166-residue chain is Small ribosomal subunit protein bS6 (166 aa).

Positions 97 to 166 are disordered; sequence EEGPSAMMRK…EEAETATDGE (70 aa). The segment covering 105–159 has biased composition (basic and acidic residues); that stretch reads RKADRDRERDDRGGGFRGEREGGFRGDREGGFRGGDRDGGGFRGDRGPRRPREEA.

This sequence belongs to the bacterial ribosomal protein bS6 family.

Its function is as follows. Binds together with bS18 to 16S ribosomal RNA. This chain is Small ribosomal subunit protein bS6, found in Bradyrhizobium diazoefficiens (strain JCM 10833 / BCRC 13528 / IAM 13628 / NBRC 14792 / USDA 110).